Consider the following 573-residue polypeptide: Sulfate adenylyltransferase (573 aa).

The tract at residues 1 to 169 is N-terminal; that stretch reads MANSPHGGVL…LEAVNRLQHY (169 aa). A catalytic region spans residues 170–394; the sequence is DFVELRYTPS…LRESHPPRSQ (225 aa). Q197 lines the sulfate pocket. ATP-binding positions include 197–200 and 291–294; these read QTRN and GRDH. Residues T198, R199, and N200 contribute to the active site. R199 contacts sulfate. Residue A295 participates in sulfate binding. ATP is bound at residue M333. Positions 395 to 573 are allosteric regulation domain; adenylyl-sulfate kinase-like; it reads QGFTIFLTGY…LESQGLLDRF (179 aa). Residues 434–437, R451, 477–478, and R515 each bind 3'-phosphoadenylyl sulfate; these read ETVR and IA.

The protein in the N-terminal section; belongs to the sulfate adenylyltransferase family. It in the C-terminal section; belongs to the APS kinase family. As to quaternary structure, homohexamer. Dimer of trimers.

Its subcellular location is the cytoplasm. The catalysed reaction is sulfate + ATP + H(+) = adenosine 5'-phosphosulfate + diphosphate. It functions in the pathway sulfur metabolism; hydrogen sulfide biosynthesis; sulfite from sulfate: step 1/3. With respect to regulation, allosterically inhibited by 3'-phosphoadenosine 5'-phosphosulfate (PAPS). Functionally, catalyzes the first intracellular reaction of sulfate assimilation, forming adenosine-5'-phosphosulfate (APS) from inorganic sulfate and ATP. Plays an important role in sulfate activation as a component of the biosynthesis pathway of sulfur-containing amino acids. The chain is Sulfate adenylyltransferase from Chaetomium globosum (strain ATCC 6205 / CBS 148.51 / DSM 1962 / NBRC 6347 / NRRL 1970) (Soil fungus).